The following is a 280-amino-acid chain: Nitrogenase iron protein (280 aa).

9–16 (GKGGIGKS) contacts ATP. Cysteine 97 contacts [4Fe-4S] cluster. ADP-ribosylarginine; by dinitrogenase reductase ADP-ribosyltransferase is present on arginine 100. Residue cysteine 132 participates in [4Fe-4S] cluster binding.

It belongs to the NifH/BchL/ChlL family. As to quaternary structure, homodimer. The cofactor is [4Fe-4S] cluster. In terms of processing, the reversible ADP-ribosylation of Arg-100 inactivates the nitrogenase reductase and regulates nitrogenase activity.

The catalysed reaction is N2 + 8 reduced [2Fe-2S]-[ferredoxin] + 16 ATP + 16 H2O = H2 + 8 oxidized [2Fe-2S]-[ferredoxin] + 2 NH4(+) + 16 ADP + 16 phosphate + 6 H(+). In terms of biological role, the key enzymatic reactions in nitrogen fixation are catalyzed by the nitrogenase complex, which has 2 components: the iron protein and the molybdenum-iron protein. The sequence is that of Nitrogenase iron protein from Desulforudis audaxviator (strain MP104C).